The chain runs to 70 residues: Large ribosomal subunit protein bL31 (70 aa).

Zn(2+) contacts are provided by Cys16, Cys18, Cys38, and Cys41.

The protein belongs to the bacterial ribosomal protein bL31 family. Type A subfamily. In terms of assembly, part of the 50S ribosomal subunit. Requires Zn(2+) as cofactor.

Its function is as follows. Binds the 23S rRNA. This chain is Large ribosomal subunit protein bL31, found in Saccharopolyspora erythraea (strain ATCC 11635 / DSM 40517 / JCM 4748 / NBRC 13426 / NCIMB 8594 / NRRL 2338).